A 149-amino-acid polypeptide reads, in one-letter code: Ribose-5-phosphate isomerase B (149 aa).

9–10 provides a ligand contact to D-ribulose 5-phosphate; it reads DH. Cysteine 66 (proton acceptor) is an active-site residue. 67–71 provides a ligand contact to D-ribulose 5-phosphate; the sequence is GTGVG. Residue histidine 99 is the Proton donor of the active site. D-ribulose 5-phosphate is bound by residues asparagine 100, arginine 110, arginine 133, and arginine 137.

Belongs to the LacAB/RpiB family. In terms of assembly, homodimer, and homotetramer.

The enzyme catalyses aldehydo-D-ribose 5-phosphate = D-ribulose 5-phosphate. It carries out the reaction D-allose 6-phosphate = D-allulose 6-phosphate. It functions in the pathway carbohydrate degradation; pentose phosphate pathway; D-ribose 5-phosphate from D-ribulose 5-phosphate (non-oxidative stage): step 1/1. Inhibited by iodoacetate and glucose 6-phosphate. In terms of biological role, catalyzes the interconversion of ribulose-5-P and ribose-5-P. It probably also has activity on D-allose 6-phosphate. The polypeptide is Ribose-5-phosphate isomerase B (Escherichia coli (strain K12)).